The following is a 139-amino-acid chain: Nucleoside diphosphate kinase (139 aa).

Lys10, Phe58, Arg86, Thr92, Arg104, and Asn114 together coordinate ATP. Residue His117 is the Pros-phosphohistidine intermediate of the active site.

This sequence belongs to the NDK family. In terms of assembly, homotetramer. It depends on Mg(2+) as a cofactor.

The protein localises to the cytoplasm. It catalyses the reaction a 2'-deoxyribonucleoside 5'-diphosphate + ATP = a 2'-deoxyribonucleoside 5'-triphosphate + ADP. It carries out the reaction a ribonucleoside 5'-diphosphate + ATP = a ribonucleoside 5'-triphosphate + ADP. In terms of biological role, major role in the synthesis of nucleoside triphosphates other than ATP. The ATP gamma phosphate is transferred to the NDP beta phosphate via a ping-pong mechanism, using a phosphorylated active-site intermediate. This is Nucleoside diphosphate kinase from Rhodococcus jostii (strain RHA1).